Here is a 146-residue protein sequence, read N- to C-terminus: Large ribosomal subunit protein uL11 (146 aa).

It belongs to the universal ribosomal protein uL11 family. In terms of assembly, part of the ribosomal stalk of the 50S ribosomal subunit. Interacts with L10 and the large rRNA to form the base of the stalk. L10 forms an elongated spine to which L12 dimers bind in a sequential fashion forming a multimeric L10(L12)X complex. Post-translationally, one or more lysine residues are methylated.

In terms of biological role, forms part of the ribosomal stalk which helps the ribosome interact with GTP-bound translation factors. This Treponema pallidum subsp. pallidum (strain SS14) protein is Large ribosomal subunit protein uL11.